Here is a 1021-residue protein sequence, read N- to C-terminus: 2-oxoglutarate dehydrogenase complex component E1 (1021 aa).

The transit peptide at Met-1–Leu-40 directs the protein to the mitochondrion. Ca(2+) is bound by residues His-142, Asp-155, and Asp-157. Residues Arg-311, Asp-410, Asn-443, and Ile-445 each contribute to the thiamine diphosphate site. Residues Asp-410, Asn-443, and Ile-445 each coordinate Mg(2+). A Glycyl lysine isopeptide (Lys-Gly) (interchain with G-Cter in ubiquitin) cross-link involves residue Lys-533. Residue Gln-675 participates in thiamine diphosphate binding.

It belongs to the alpha-ketoglutarate dehydrogenase family. In terms of assembly, homodimer. The 2-oxoglutarate dehydrogenase complex is composed of OGDH (2-oxoglutarate dehydrogenase; E1), DLST (dihydrolipoamide succinyltransferase; E2) and DLD (dihydrolipoamide dehydrogenase; E3). It contains multiple copies of the three enzymatic components (E1, E2 and E3). In the nucleus, the 2-oxoglutarate dehydrogenase complex associates with kat2a. Requires thiamine diphosphate as cofactor. Mg(2+) serves as cofactor. As to expression, expressed in the brain.

It is found in the mitochondrion. The protein resides in the nucleus. The catalysed reaction is N(6)-[(R)-lipoyl]-L-lysyl-[protein] + 2-oxoglutarate + H(+) = N(6)-[(R)-S(8)-succinyldihydrolipoyl]-L-lysyl-[protein] + CO2. Calcium ions and ADP stimulate, whereas ATP and NADH reduce catalytic activity. Functionally, 2-oxoglutarate dehydrogenase (E1o) component of the 2-oxoglutarate dehydrogenase complex (OGDHC). Participates in the first step, rate limiting for the overall conversion of 2-oxoglutarate to succinyl-CoA and CO(2) catalyzed by the whole OGDHC. Catalyzes the irreversible decarboxylation of 2-oxoglutarate (alpha-ketoglutarate) via the thiamine diphosphate (ThDP) cofactor and subsequent transfer of the decarboxylated acyl intermediate on an oxidized dihydrolipoyl group that is covalently amidated to the E2 enzyme (dihydrolipoyllysine-residue succinyltransferase or DLST). Plays a key role in the Krebs (citric acid) cycle, which is a common pathway for oxidation of fuel molecules, including carbohydrates, fatty acids, and amino acids. Can catalyze the decarboxylation of 2-oxoadipate in vitro, but at a much lower rate than 2-oxoglutarate. Mainly active in the mitochondrion. A fraction of the 2-oxoglutarate dehydrogenase complex also localizes in the nucleus and is required for lysine succinylation of histones: associates with KAT2A on chromatin and provides succinyl-CoA to histone succinyltransferase KAT2A. The chain is 2-oxoglutarate dehydrogenase complex component E1 (ogdh) from Xenopus laevis (African clawed frog).